Consider the following 546-residue polypeptide: Chaperonin GroEL 1 (546 aa).

ATP is bound by residues 29 to 32 (TIGP), 86 to 90 (DGTTT), Gly413, 477 to 479 (NAA), and Asp493. A disordered region spans residues 523 to 546 (PAEPAPQDGHGHGHGHSHPQGPGF).

The protein belongs to the chaperonin (HSP60) family. In terms of assembly, forms a cylinder of 14 subunits composed of two heptameric rings stacked back-to-back. Interacts with the co-chaperonin GroES.

The protein resides in the cytoplasm. The enzyme catalyses ATP + H2O + a folded polypeptide = ADP + phosphate + an unfolded polypeptide.. Functionally, together with its co-chaperonin GroES, plays an essential role in assisting protein folding. The GroEL-GroES system forms a nano-cage that allows encapsulation of the non-native substrate proteins and provides a physical environment optimized to promote and accelerate protein folding. In Frankia casuarinae (strain DSM 45818 / CECT 9043 / HFP020203 / CcI3), this protein is Chaperonin GroEL 1.